A 273-amino-acid chain; its full sequence is Putative pyruvate, phosphate dikinase regulatory protein 2 (273 aa).

Position 151–158 (151–158 (GISRTSKT)) interacts with ADP.

It belongs to the pyruvate, phosphate/water dikinase regulatory protein family. PDRP subfamily.

It carries out the reaction N(tele)-phospho-L-histidyl/L-threonyl-[pyruvate, phosphate dikinase] + ADP = N(tele)-phospho-L-histidyl/O-phospho-L-threonyl-[pyruvate, phosphate dikinase] + AMP + H(+). The catalysed reaction is N(tele)-phospho-L-histidyl/O-phospho-L-threonyl-[pyruvate, phosphate dikinase] + phosphate + H(+) = N(tele)-phospho-L-histidyl/L-threonyl-[pyruvate, phosphate dikinase] + diphosphate. Its function is as follows. Bifunctional serine/threonine kinase and phosphorylase involved in the regulation of the pyruvate, phosphate dikinase (PPDK) by catalyzing its phosphorylation/dephosphorylation. The sequence is that of Putative pyruvate, phosphate dikinase regulatory protein 2 from Staphylococcus saprophyticus subsp. saprophyticus (strain ATCC 15305 / DSM 20229 / NCIMB 8711 / NCTC 7292 / S-41).